The following is a 315-amino-acid chain: HPr kinase/phosphorylase (315 aa).

Residues His140 and Lys161 contribute to the active site. 155-162 contacts ATP; that stretch reads GDSGVGKS. Ser162 is a binding site for Mg(2+). The Proton acceptor; for phosphorylation activity. Proton donor; for dephosphorylation activity role is filled by Asp179. The interval 203–212 is important for the catalytic mechanism of both phosphorylation and dephosphorylation; the sequence is LEIRGIGIID. Glu204 lines the Mg(2+) pocket. Residue Arg245 is part of the active site. The tract at residues 266–271 is important for the catalytic mechanism of dephosphorylation; it reads PVKTGR.

The protein belongs to the HPrK/P family. As to quaternary structure, homohexamer. Mg(2+) is required as a cofactor.

It catalyses the reaction [HPr protein]-L-serine + ATP = [HPr protein]-O-phospho-L-serine + ADP + H(+). The catalysed reaction is [HPr protein]-O-phospho-L-serine + phosphate + H(+) = [HPr protein]-L-serine + diphosphate. In terms of biological role, catalyzes the ATP- as well as the pyrophosphate-dependent phosphorylation of a specific serine residue in HPr, a phosphocarrier protein of the phosphoenolpyruvate-dependent sugar phosphotransferase system (PTS). HprK/P also catalyzes the pyrophosphate-producing, inorganic phosphate-dependent dephosphorylation (phosphorolysis) of seryl-phosphorylated HPr (P-Ser-HPr). The two antagonistic activities of HprK/P are regulated by several intracellular metabolites, which change their concentration in response to the absence or presence of rapidly metabolisable carbon sources (glucose, fructose, etc.) in the growth medium. Therefore, by controlling the phosphorylation state of HPr, HPrK/P is a sensor enzyme that plays a major role in the regulation of carbon metabolism and sugar transport: it mediates carbon catabolite repression (CCR), and regulates PTS-catalyzed carbohydrate uptake and inducer exclusion. This Lactiplantibacillus plantarum (strain ATCC BAA-793 / NCIMB 8826 / WCFS1) (Lactobacillus plantarum) protein is HPr kinase/phosphorylase.